A 277-amino-acid polypeptide reads, in one-letter code: MSSPAAQTPYALVPTDAEWERLDAQHNGIAKFLDHKLAPVDLGQPKKILEIGSGSGAWAIQAAKQFPDADVLAVDQNPLPARPLPSNIRFQQLNVLEPFPFPPGSFDIVHIRFVLCHLPNGYTVLPRIIELVAPGGWLLVDDIDFLHAFEGLDKAPGVKSGFTGLIKSMESHDADPHFGKTLKGLLESSSALSEVNVQKVELPINPTPEXPALGPLSRTMRQAFSNAVGAEKLNPDTVTKGGLTREVQQAFLNEMGGDAQDWSYSVHLYFSWSQKRV.

It belongs to the methyltransferase superfamily. LaeA methyltransferase family.

The protein operates within mycotoxin biosynthesis. In terms of biological role, methyltransferase; part of the gene cluster that mediates the biosynthesis of strobilurin A, an antifungal polyketide that contains a key beta-methoxyacrylate toxophore that targets the complex III of the mitochondrial electron transport chain. Strobilurin biosynthesis begins with construction of benzoyl CoA by step-wise elimination of ammonia from phenylalanine by the phenylalanine ammonia-lyase str11, oxygenation by str8 and retro-Claisen reaction to form benzoic acid, which is activated to its CoA thiolester benzoyl CoA by the dedicated CoA ligase str10. Benzoyl CoA forms the starter unit for the highly reducing polyketide synthase stpks1 that produces the polyketide prestrobilutin A. The FAD-dependent oxygenase str9 then catalyzes the key oxidative rearrangement responsible for the creation of the beta-methoxyacrylate toxophore. Str9 performs epoxidation of the 2,3 olefin of prestrobilutin A, followed by Meinwald rearrangement to furnish the aldehyde intermediate. Rapid enolization of the aldehyde intermediate would give the beta-methoxyacrylate skeleton and methylations catalyzed by str2 and str3 complete the synthesis and lead to the production of strobilurin A. The short-chain dehydrogenase stl2 and the dehydrogenase str4 play a role in the shunt pathway leading to the production of bolineol. The cluster encodes no obvious halogenase gene that could be involved in production of strobilurin B, nor any obvious dimethylallyl-transferase that could be involved in the production of strobilurin G. It is possible that unknown proteins encoded in, or near, the cluster (such as str1 or stl1) may form new classes of halogenases or dimethylally-transferases, or that the responsible genes are located elsewhere on the genome. Similarly, proteins encoded by str5/str6 hydrolases appear to have no chemical role in the biosynthesis of strobilurin A. Finally, no obvious self-resistance gene is found within the cluster. The protein is Methyltransferase str3 of Strobilurus tenacellus.